We begin with the raw amino-acid sequence, 120 residues long: Large ribosomal subunit protein bL19c (120 aa).

It belongs to the bacterial ribosomal protein bL19 family.

It is found in the plastid. The protein localises to the chloroplast. The sequence is that of Large ribosomal subunit protein bL19c from Thalassiosira weissflogii (Marine diatom).